Here is a 413-residue protein sequence, read N- to C-terminus: Multidrug resistance protein MdtA (413 aa).

The signal sequence occupies residues 1–20 (MKGSNTFRWAIAIGVVVAAA). 2 disordered regions span residues 31–57 (SPTA…RDGP) and 391–413 (EPQT…GARA). Positions 32–49 (PTAAPGVAAQAQHTAAAG) are enriched in low complexity. Positions 397–413 (ADEKSPSRHEGQKGARA) are enriched in basic and acidic residues.

It belongs to the membrane fusion protein (MFP) (TC 8.A.1) family. Part of a tripartite efflux system composed of MdtA, MdtB and MdtC.

The protein localises to the cell inner membrane. This chain is Multidrug resistance protein MdtA, found in Salmonella typhi.